Reading from the N-terminus, the 329-residue chain is Porphobilinogen deaminase (329 aa).

C253 is subject to S-(dipyrrolylmethanemethyl)cysteine.

Belongs to the HMBS family. Monomer. It depends on dipyrromethane as a cofactor.

The catalysed reaction is 4 porphobilinogen + H2O = hydroxymethylbilane + 4 NH4(+). Tetrapolymerization of the monopyrrole PBG into the hydroxymethylbilane pre-uroporphyrinogen in several discrete steps. The protein is Porphobilinogen deaminase of Leifsonia xyli subsp. xyli (strain CTCB07).